The primary structure comprises 476 residues: Glycogen synthase (476 aa).

Residue Lys15 coordinates ADP-alpha-D-glucose.

The protein belongs to the glycosyltransferase 1 family. Bacterial/plant glycogen synthase subfamily.

The enzyme catalyses [(1-&gt;4)-alpha-D-glucosyl](n) + ADP-alpha-D-glucose = [(1-&gt;4)-alpha-D-glucosyl](n+1) + ADP + H(+). It functions in the pathway glycan biosynthesis; glycogen biosynthesis. Its function is as follows. Synthesizes alpha-1,4-glucan chains using ADP-glucose. The polypeptide is Glycogen synthase (Bacillus anthracis).